The primary structure comprises 274 residues: Large ribosomal subunit protein uL2 (274 aa).

Disordered stretches follow at residues 37-60 (QHQK…GHKH) and 224-252 (AMNP…WGNL). The segment covering 50–60 (TTRHKGGGHKH) has biased composition (basic residues). Basic and acidic residues predominate over residues 229 to 246 (DHPHGGGEGRTGEGRHAV).

This sequence belongs to the universal ribosomal protein uL2 family. As to quaternary structure, part of the 50S ribosomal subunit. Forms a bridge to the 30S subunit in the 70S ribosome.

In terms of biological role, one of the primary rRNA binding proteins. Required for association of the 30S and 50S subunits to form the 70S ribosome, for tRNA binding and peptide bond formation. It has been suggested to have peptidyltransferase activity; this is somewhat controversial. Makes several contacts with the 16S rRNA in the 70S ribosome. This chain is Large ribosomal subunit protein uL2, found in Paracidovorax citrulli (strain AAC00-1) (Acidovorax citrulli).